The following is a 195-amino-acid chain: Sec-independent protein translocase protein TatB (195 aa).

Residues 1–21 (MFDIGFSELALIAVVALVVLG) form a helical membrane-spanning segment. The segment at 130–195 (EPGSAQPHTP…SSTSPQEKTP (66 aa)) is disordered. 2 stretches are compositionally biased toward low complexity: residues 145-157 (PVVA…APAP) and 175-195 (TTHA…EKTP).

It belongs to the TatB family. As to quaternary structure, the Tat system comprises two distinct complexes: a TatABC complex, containing multiple copies of TatA, TatB and TatC subunits, and a separate TatA complex, containing only TatA subunits. Substrates initially bind to the TatABC complex, which probably triggers association of the separate TatA complex to form the active translocon.

The protein resides in the cell inner membrane. Its function is as follows. Part of the twin-arginine translocation (Tat) system that transports large folded proteins containing a characteristic twin-arginine motif in their signal peptide across membranes. Together with TatC, TatB is part of a receptor directly interacting with Tat signal peptides. TatB may form an oligomeric binding site that transiently accommodates folded Tat precursor proteins before their translocation. This Xanthomonas campestris pv. campestris (strain 8004) protein is Sec-independent protein translocase protein TatB.